Consider the following 381-residue polypeptide: Pectin lyase 1 (381 aa).

Positions 1 to 20 (MKYASFIAAAAAALASAVSA) are cleaved as a signal peptide. Disulfide bonds link Cys-83–Cys-102 and Cys-92–Cys-227. An N-linked (GlcNAc...) asparagine glycan is attached at Asn-130. Arg-257 is a catalytic residue. Cys-324 and Cys-332 are joined by a disulfide.

It belongs to the polysaccharide lyase 1 family.

The protein resides in the secreted. It catalyses the reaction Eliminative cleavage of (1-&gt;4)-alpha-D-galacturonan methyl ester to give oligosaccharides with 4-deoxy-6-O-methyl-alpha-D-galact-4-enuronosyl groups at their non-reducing ends.. Functionally, pectinolytic enzymes consist of four classes of enzymes: pectin lyase, polygalacturonase, pectin methylesterase and rhamnogalacturonase. Among pectinolytic enzymes, pectin lyase is the most important in depolymerization of pectin, since it cleaves internal glycosidic bonds of highly methylated pectins. This Aspergillus oryzae (strain ATCC 42149 / RIB 40) (Yellow koji mold) protein is Pectin lyase 1 (pel1).